The following is a 221-amino-acid chain: Ribonuclease T (221 aa).

Residues 20–194 (VVIDVETAGF…YDTERTAELF (175 aa)) enclose the Exonuclease domain. Mg(2+)-binding residues include Asp-23, Glu-25, His-181, and Asp-186. Catalysis depends on His-181, which acts as the Proton donor/acceptor.

It belongs to the RNase T family. As to quaternary structure, homodimer. Mg(2+) serves as cofactor.

Trims short 3' overhangs of a variety of RNA species, leaving a one or two nucleotide 3' overhang. Responsible for the end-turnover of tRNA: specifically removes the terminal AMP residue from uncharged tRNA (tRNA-C-C-A). Also appears to be involved in tRNA biosynthesis. The chain is Ribonuclease T from Shewanella frigidimarina (strain NCIMB 400).